Here is a 209-residue protein sequence, read N- to C-terminus: Na(+)-translocating NADH-quinone reductase subunit D (209 aa).

A run of 5 helical transmembrane segments spans residues 42-62, 66-86, 103-123, 131-151, and 178-198; these read LVMTIAVTLVTAFSNFFISLI, IPGSVRIIVQMAIIASLVIVV, VFVGLIITNCIVMGRAEAYAM, FMDGIGNGLGYGVILILVGFL, and NGLFLLAPSAFFIIGLLIWGL.

This sequence belongs to the NqrDE/RnfAE family. Composed of six subunits; NqrA, NqrB, NqrC, NqrD, NqrE and NqrF.

The protein resides in the cell inner membrane. The enzyme catalyses a ubiquinone + n Na(+)(in) + NADH + H(+) = a ubiquinol + n Na(+)(out) + NAD(+). In terms of biological role, NQR complex catalyzes the reduction of ubiquinone-1 to ubiquinol by two successive reactions, coupled with the transport of Na(+) ions from the cytoplasm to the periplasm. NqrA to NqrE are probably involved in the second step, the conversion of ubisemiquinone to ubiquinol. The chain is Na(+)-translocating NADH-quinone reductase subunit D from Proteus mirabilis (strain HI4320).